Here is a 252-residue protein sequence, read N- to C-terminus: Ribosomal RNA small subunit methyltransferase NEP1 (252 aa).

Residues Leu-180, Gly-207, 212-214 (GKD), and 227-232 (LSNYPL) contribute to the S-adenosyl-L-methionine site.

It belongs to the class IV-like SAM-binding methyltransferase superfamily. RNA methyltransferase NEP1 family. Homodimer. Interacts with snoRNA U3. Interacts with NOP14 and MPP10. Component of the ribosomal small subunit (SSU) processome composed of at least 40 protein subunits and snoRNA U3.

The protein resides in the nucleus. Its subcellular location is the nucleolus. The catalysed reaction is pseudouridine(1191) in yeast 18S rRNA + S-adenosyl-L-methionine = N(1)-methylpseudouridine(1191) in yeast 18S rRNA + S-adenosyl-L-homocysteine + H(+). S-adenosyl-L-methionine-dependent pseudouridine N(1)-methyltransferase that methylates pseudouridine at position 1189 (Psi1189) in 18S rRNA. Involved the biosynthesis of the hypermodified N1-methyl-N3-(3-amino-3-carboxypropyl) pseudouridine (m1acp3-Psi) conserved in eukaryotic 18S rRNA. N1-methylation is independent on acp-modification at the N3-position of U1191. Also has an essential role in 40S ribosomal subunit biogenesis independent on its methyltransferase activity, facilitating the incorporation of ribosomal protein S19 (RPS19A/RPS19B) during the formation of pre-ribosomes. In Saccharomyces cerevisiae (strain ATCC 204508 / S288c) (Baker's yeast), this protein is Ribosomal RNA small subunit methyltransferase NEP1.